Reading from the N-terminus, the 176-residue chain is NADH:riboflavin 5'-phosphate oxidoreductase (176 aa).

Functionally, provides the reduced form of flavin mononucleotide for the PIIA synthase reaction. The chain is NADH:riboflavin 5'-phosphate oxidoreductase (snaC) from Streptomyces pristinaespiralis.